The following is a 1009-amino-acid chain: C2 domain-containing protein aex-1 (1009 aa).

A C2 domain is found at 812–945; that stretch reads NAPHVDVHIS…ASEEKPTQRL (134 aa).

The protein belongs to the unc-13 family. Expressed in intestine, body wall muscles and some amphid neurons.

Functionally, involved in retrograde signaling from post-synaptic cells to pre-synaptic neurons, probably by regulating vesicle exocytosis in post-synaptic cells. Acts in muscles, to regulate the localization of synaptic vesicle fusion protein unc-13 likely during vesicle exocytosis and thus regulate retrograde signaling at the neuromuscular junction (NMJ). Regulates anterior body muscle contractions (aBOC) and the expulsion steps during the defecation motor program (DMP). Probably by regulating DMP, plays a homeostatic role in the uptake of triglycerides. Regulates locomotion. The polypeptide is C2 domain-containing protein aex-1 (Caenorhabditis elegans).